The following is a 109-amino-acid chain: Cell division protein ZapA (109 aa).

The stretch at 21–99 (PEQQDALNQA…IEQALLEQGR (79 aa)) forms a coiled coil.

The protein belongs to the ZapA family. Type 1 subfamily. In terms of assembly, homodimer. Interacts with FtsZ.

The protein resides in the cytoplasm. Its function is as follows. Activator of cell division through the inhibition of FtsZ GTPase activity, therefore promoting FtsZ assembly into bundles of protofilaments necessary for the formation of the division Z ring. It is recruited early at mid-cell but it is not essential for cell division. The polypeptide is Cell division protein ZapA (Pectobacterium carotovorum subsp. carotovorum (strain PC1)).